Here is a 388-residue protein sequence, read N- to C-terminus: 4-hydroxy-tetrahydrodipicolinate synthase 1, chloroplastic (388 aa).

Positions 1-51 (MPYLQPPRPHPHPHPTSRLSRASPPSPFPFFPAGTSRSGRLQPVPVSGHSA) are disordered. The transit peptide at 1 to 62 (MPYLQPPRPH…RVSKGKFAVA (62 aa)) directs the protein to the chloroplast. T131 lines the pyruvate pocket. The active-site Proton donor/acceptor is Y217. Residue K245 is the Schiff-base intermediate with substrate of the active site. I284 contributes to the pyruvate binding site.

This sequence belongs to the DapA family. In terms of assembly, tetramer of modified subunits derived from two genes in different combinations.

It is found in the plastid. It localises to the chloroplast. The catalysed reaction is L-aspartate 4-semialdehyde + pyruvate = (2S,4S)-4-hydroxy-2,3,4,5-tetrahydrodipicolinate + H2O + H(+). It functions in the pathway amino-acid biosynthesis; L-lysine biosynthesis via DAP pathway; (S)-tetrahydrodipicolinate from L-aspartate: step 3/4. Its activity is regulated as follows. Sensitive to lysine inhibition. This inhibition increase in an allosteric manner with increasing concentration of the inhibitor. Catalyzes the condensation of (S)-aspartate-beta-semialdehyde [(S)-ASA] and pyruvate to 4-hydroxy-tetrahydrodipicolinate (HTPA). This chain is 4-hydroxy-tetrahydrodipicolinate synthase 1, chloroplastic, found in Triticum aestivum (Wheat).